Here is a 301-residue protein sequence, read N- to C-terminus: Acetylglutamate kinase (301 aa).

Substrate-binding positions include Gly64–Gly65, Arg86, and Asn181.

Belongs to the acetylglutamate kinase family. ArgB subfamily.

The protein resides in the cytoplasm. It catalyses the reaction N-acetyl-L-glutamate + ATP = N-acetyl-L-glutamyl 5-phosphate + ADP. It participates in amino-acid biosynthesis; L-arginine biosynthesis; N(2)-acetyl-L-ornithine from L-glutamate: step 2/4. Catalyzes the ATP-dependent phosphorylation of N-acetyl-L-glutamate. The sequence is that of Acetylglutamate kinase from Aliarcobacter butzleri (strain RM4018) (Arcobacter butzleri).